The following is a 420-amino-acid chain: UDP-N-acetylglucosamine 1-carboxyvinyltransferase (420 aa).

Lys-22–Asn-23 provides a ligand contact to phosphoenolpyruvate. Arg-91 is a UDP-N-acetyl-alpha-D-glucosamine binding site. Cys-115 acts as the Proton donor in catalysis. Cys-115 is subject to 2-(S-cysteinyl)pyruvic acid O-phosphothioketal. UDP-N-acetyl-alpha-D-glucosamine is bound by residues Arg-120–Leu-124, Lys-160–Val-163, Asp-305, and Ile-327.

This sequence belongs to the EPSP synthase family. MurA subfamily.

The protein resides in the cytoplasm. The catalysed reaction is phosphoenolpyruvate + UDP-N-acetyl-alpha-D-glucosamine = UDP-N-acetyl-3-O-(1-carboxyvinyl)-alpha-D-glucosamine + phosphate. The protein operates within cell wall biogenesis; peptidoglycan biosynthesis. Its function is as follows. Cell wall formation. Adds enolpyruvyl to UDP-N-acetylglucosamine. The sequence is that of UDP-N-acetylglucosamine 1-carboxyvinyltransferase from Erwinia tasmaniensis (strain DSM 17950 / CFBP 7177 / CIP 109463 / NCPPB 4357 / Et1/99).